Reading from the N-terminus, the 832-residue chain is Cytosolic carboxypeptidase-like protein 5 (832 aa).

Residues 27-50 are disordered; the sequence is TVPSDGEGVGGAATAPTSGSASSP. The span at 38–50 shows a compositional bias: low complexity; sequence AATAPTSGSASSP. In terms of domain architecture, Peptidase M14 spans 157 to 571; the sequence is YPFSYSDCQD…ALAIAALDMA (415 aa). His252 and Glu255 together coordinate Zn(2+). The segment covering 343–354 has biased composition (low complexity); the sequence is NSKNPSNQQPSS. Disordered stretches follow at residues 343 to 362 and 376 to 402; these read NSKN…PEVP and LHLG…KTDP. The segment covering 384–401 has biased composition (basic and acidic residues); sequence GENHDRWTETEPTEEKTD. His435 serves as a coordination point for Zn(2+). Glu517 serves as the catalytic Proton donor/acceptor. Residues 606–752 are disordered; it reads STANVGLNKK…ASPTSSRNMG (147 aa). Residues 621-636 are compositionally biased toward polar residues; that stretch reads PPKSNNGLPVSCSENA. The span at 644–654 shows a compositional bias: low complexity; it reads STGTSTGGSSS. Residues 655-666 show a composition bias toward polar residues; that stretch reads QQNSPQMKNSPS. The span at 708–752 shows a compositional bias: low complexity; the sequence is QQQQQQQQQQQQQQQQPLNQRSTTSSLAPSPTLASASPTSSRNMG.

Belongs to the peptidase M14 family. It depends on Zn(2+) as a cofactor.

It localises to the cytoplasm. Its subcellular location is the cytosol. The protein resides in the nucleus. It is found in the cytoskeleton. The protein localises to the spindle. It localises to the midbody. It carries out the reaction gamma-L-glutamyl-L-glutamyl-[protein] + H2O = L-glutamyl-[protein] + L-glutamate. The enzyme catalyses (L-glutamyl)(n+1)-gamma-L-glutamyl-L-glutamyl-[protein] + H2O = (L-glutamyl)(n)-gamma-L-glutamyl-L-glutamyl-[protein] + L-glutamate. The catalysed reaction is C-terminal L-alpha-aminoacyl-L-glutamyl-[tubulin] + H2O = C-terminal L-alpha-aminoacyl-[tubulin] + L-glutamate. It catalyses the reaction C-terminal L-alpha-aminoacyl-L-glutamyl-L-glutamyl-[tubulin] + H2O = C-terminal L-alpha-aminoacyl-L-glutamyl-[tubulin] + L-glutamate. Functionally, metallocarboxypeptidase that mediates deglutamylation of tubulin and non-tubulin target proteins. Catalyzes the removal of polyglutamate side chains present on the gamma-carboxyl group of glutamate residues within the C-terminal tail of alpha- and beta-tubulin. Cleaves alpha- and gamma-linked polyglutamate tubulin side-chain, as well as the branching point glutamate. Also catalyzes the removal of alpha-linked glutamate residues from the carboxy-terminus of alpha-tubulin. Mediates deglutamylation of nucleotidyltransferase CGAS, leading to CGAS antiviral defense response activation. This chain is Cytosolic carboxypeptidase-like protein 5 (Agbl5), found in Rattus norvegicus (Rat).